The primary structure comprises 303 residues: UDP-N-acetylenolpyruvoylglucosamine reductase (303 aa).

In terms of domain architecture, FAD-binding PCMH-type spans 29–196 (KIGGPADILI…LEAVLQLEQK (168 aa)). Residue Arg174 is part of the active site. Ser225 (proton donor) is an active-site residue. Glu295 is an active-site residue.

This sequence belongs to the MurB family. FAD is required as a cofactor.

The protein resides in the cytoplasm. It carries out the reaction UDP-N-acetyl-alpha-D-muramate + NADP(+) = UDP-N-acetyl-3-O-(1-carboxyvinyl)-alpha-D-glucosamine + NADPH + H(+). It participates in cell wall biogenesis; peptidoglycan biosynthesis. Cell wall formation. The sequence is that of UDP-N-acetylenolpyruvoylglucosamine reductase from Bacillus velezensis (strain DSM 23117 / BGSC 10A6 / LMG 26770 / FZB42) (Bacillus amyloliquefaciens subsp. plantarum).